Consider the following 334-residue polypeptide: Galactinol synthase 3 (334 aa).

The active site involves Lys97. The Mn(2+) site is built by Asp113, Asp115, and His251.

The protein belongs to the glycosyltransferase 8 family. Galactosyltransferase subfamily. A divalent metal cation serves as cofactor.

The protein resides in the cytoplasm. The catalysed reaction is myo-inositol + UDP-alpha-D-galactose = alpha-D-galactosyl-(1-&gt;3)-1D-myo-inositol + UDP + H(+). Functionally, galactinol synthase involved in the biosynthesis of raffinose family oligosaccharides (RFOs) that function as osmoprotectants. May promote plant stress tolerance. The polypeptide is Galactinol synthase 3 (GOLS3) (Arabidopsis thaliana (Mouse-ear cress)).